The chain runs to 234 residues: Mediator of RNA polymerase II transcription subunit 4 (234 aa).

The stretch at 71 to 124 forms a coiled coil; that stretch reads HQEAYRRLVEKKNEVAGLEMRVRGLVKRLEEGRKELEGMIDQGERSLEDIQKSE. Residues 188–234 are disordered; sequence GVVGEEQKAPQKVEERREHVEHEESGRRYDPNAVFQLDLNSDESDED. Positions 189-217 are enriched in basic and acidic residues; that stretch reads VVGEEQKAPQKVEERREHVEHEESGRRYD.

It belongs to the Mediator complex subunit 4 family. As to quaternary structure, component of the Mediator complex.

The protein localises to the nucleus. Functionally, component of the Mediator complex, a coactivator involved in the regulated transcription of nearly all RNA polymerase II-dependent genes. Mediator functions as a bridge to convey information from gene-specific regulatory proteins to the basal RNA polymerase II transcription machinery. Mediator is recruited to promoters by direct interactions with regulatory proteins and serves as a scaffold for the assembly of a functional preinitiation complex with RNA polymerase II and the general transcription factors. The polypeptide is Mediator of RNA polymerase II transcription subunit 4 (MED4) (Cryptococcus neoformans var. neoformans serotype D (strain B-3501A) (Filobasidiella neoformans)).